The primary structure comprises 311 residues: Nod factor export ATP-binding protein I (311 aa).

The ABC transporter domain maps to 13 to 243 (IDLAGVSKSY…QIGCPVIEIY (231 aa)). 45 to 52 (GPNGAGKS) contacts ATP.

It belongs to the ABC transporter superfamily. Lipooligosaccharide exporter (TC 3.A.1.102) family. The complex is composed of two ATP-binding proteins (NodI) and two transmembrane proteins (NodJ).

It is found in the cell inner membrane. Functionally, part of the ABC transporter complex NodIJ involved in the export of the nodulation factors (Nod factors), the bacterial signal molecules that induce symbiosis and subsequent nodulation induction. Nod factors are LCO (lipo-chitin oligosaccharide), a modified beta-1,4-linked N-acetylglucosamine oligosaccharide. This subunit is responsible for energy coupling to the transport system. In Rhizobium johnstonii (strain DSM 114642 / LMG 32736 / 3841) (Rhizobium leguminosarum bv. viciae), this protein is Nod factor export ATP-binding protein I.